The sequence spans 234 residues: 3-dehydroquinate dehydratase (234 aa).

3-dehydroquinate contacts are provided by residues 33 to 35 (EWR) and Arg68. The active-site Proton donor/acceptor is His124. Catalysis depends on Lys151, which acts as the Schiff-base intermediate with substrate. 3 residues coordinate 3-dehydroquinate: Arg193, Ser214, and Gln218.

This sequence belongs to the type-I 3-dehydroquinase family. As to quaternary structure, homodimer.

The catalysed reaction is 3-dehydroquinate = 3-dehydroshikimate + H2O. It functions in the pathway metabolic intermediate biosynthesis; chorismate biosynthesis; chorismate from D-erythrose 4-phosphate and phosphoenolpyruvate: step 3/7. Involved in the third step of the chorismate pathway, which leads to the biosynthesis of aromatic amino acids. Catalyzes the cis-dehydration of 3-dehydroquinate (DHQ) and introduces the first double bond of the aromatic ring to yield 3-dehydroshikimate. In Syntrophobacter fumaroxidans (strain DSM 10017 / MPOB), this protein is 3-dehydroquinate dehydratase.